Consider the following 217-residue polypeptide: Large ribosomal subunit protein uL3 (217 aa).

Positions 127–162 are disordered; it reads GFSRGPMSHGSKNHRAPGSTGAGTTPGRIYPGKRMA. Over residues 142 to 153 the composition is skewed to low complexity; it reads APGSTGAGTTPG.

Belongs to the universal ribosomal protein uL3 family. In terms of assembly, part of the 50S ribosomal subunit. Forms a cluster with proteins L14 and L19.

One of the primary rRNA binding proteins, it binds directly near the 3'-end of the 23S rRNA, where it nucleates assembly of the 50S subunit. In Prochlorococcus marinus (strain AS9601), this protein is Large ribosomal subunit protein uL3.